The sequence spans 149 residues: RALGPLFPSRLFDQYLGEGLFDYDLLPFFSSTISPYYRHSLFRTVLESGISEVRSDRDKFTILLDVKHFSPEDLSVKIMDDFVEIHGKHNERQDDHGYISREFHRRYRLPSNVDQSAITCSLSADGMLTFSGPKVQSNMDTSYSERPIP.

Positions 41-149 (LFRTVLESGI…DTSYSERPIP (109 aa)) constitute a sHSP domain. Positions 89, 91, and 96 each coordinate Zn(2+).

This sequence belongs to the small heat shock protein (HSP20) family. In terms of assembly, heteropolymer composed of three CRYAA and one CRYAB subunits. Inter-subunit bridging via zinc ions enhances stability, which is crucial as there is no protein turn over in the lens. Zinc coordination is achieved at least by His-89, Glu-91 and His-96. His-83 and Glu-85 come from the same molecule within the oligomer, while His-90 residue is provided by another molecule. Can also form homodimers and homotetramers (dimers of dimers) which serve as the building blocks of homooligomers.

It localises to the cytoplasm. Its subcellular location is the nucleus. Contributes to the transparency and refractive index of the lens. May act as a chaperone, preventing aggregation of various proteins under a wide range of stress conditions. The polypeptide is Alpha-crystallin A chain (CRYAA) (Trachemys scripta elegans (Red-eared slider turtle)).